The primary structure comprises 459 residues: Putrescine aminotransferase (459 aa).

Pyridoxal 5'-phosphate is bound by residues 150–151 (GT) and Gln-274. Lys-300 carries the N6-(pyridoxal phosphate)lysine modification. Thr-332 contributes to the pyridoxal 5'-phosphate binding site.

It belongs to the class-III pyridoxal-phosphate-dependent aminotransferase family. Putrescine aminotransferase subfamily. Pyridoxal 5'-phosphate serves as cofactor.

It catalyses the reaction an alkane-alpha,omega-diamine + 2-oxoglutarate = an omega-aminoaldehyde + L-glutamate. It carries out the reaction putrescine + 2-oxoglutarate = 1-pyrroline + L-glutamate + H2O. The catalysed reaction is cadaverine + 2-oxoglutarate = 5-aminopentanal + L-glutamate. It participates in amine and polyamine degradation; putrescine degradation; 4-aminobutanal from putrescine (transaminase route): step 1/1. Its function is as follows. Catalyzes the aminotransferase reaction from putrescine to 2-oxoglutarate, leading to glutamate and 4-aminobutanal, which spontaneously cyclizes to form 1-pyrroline. This is the first step in one of two pathways for putrescine degradation, where putrescine is converted into 4-aminobutanoate (gamma-aminobutyrate or GABA) via 4-aminobutanal. Also functions as a cadaverine transaminase in a a L-lysine degradation pathway to succinate that proceeds via cadaverine, glutarate and L-2-hydroxyglutarate. The sequence is that of Putrescine aminotransferase from Salmonella paratyphi A (strain ATCC 9150 / SARB42).